Here is an 859-residue protein sequence, read N- to C-terminus: DNA mismatch repair protein MutS (859 aa).

An ATP-binding site is contributed by 617 to 624; that stretch reads GPNMGGKS. Positions 801–820 are disordered; it reads TSLPHEVAPQAPGKPSVPQQ.

It belongs to the DNA mismatch repair MutS family.

Its function is as follows. This protein is involved in the repair of mismatches in DNA. It is possible that it carries out the mismatch recognition step. This protein has a weak ATPase activity. This chain is DNA mismatch repair protein MutS, found in Pseudomonas fluorescens (strain ATCC BAA-477 / NRRL B-23932 / Pf-5).